Here is a 217-residue protein sequence, read N- to C-terminus: Trimethylamine corrinoid protein 2 (217 aa).

A B12-binding N-terminal domain is found at 1–92; it reads MAGKEEIIAK…EMEKRKAKTT (92 aa). Positions 94–217 constitute a B12-binding domain; that stretch reads LGTVIIGTIE…VNKIKAAIKS (124 aa). Position 107 (H107) interacts with methylcob(III)alamin.

Belongs to the methylamine corrinoid protein family. As to quaternary structure, can form a complex with MttB.

It participates in one-carbon metabolism; methanogenesis from trimethylamine. Acts probably as a methyl group carrier between MttB and either MtbA or MtaA. This is Trimethylamine corrinoid protein 2 (mttC2) from Methanosarcina acetivorans (strain ATCC 35395 / DSM 2834 / JCM 12185 / C2A).